A 469-amino-acid polypeptide reads, in one-letter code: MANGRVVQVMGPVVDVEFDRGHLPAIYNAIKIQHKAQSAGERDIDLTVEVATHLGDNLVRTVAMSSTDGLVRGMEAVDTGAAISVPVGAITLGRVFNVLGEPIDLQELGQVDRRDPIHRKAPEFVDQATTVEILETGIKVIDLLAPYIKGGKIGLFGGAGVGKTVTIQELINNIAQEHGGISVFAGVGERTREGNDLYHEMKDAGVLPKTAMVFGQMNEPPGARLRVALTGLTMAEYFRDEEGRDVLLFVDNIFRFTQAGSEVSALLGRMPSAVGYQPTLATEMGQLQERITSTKKGSVTSIQAIYVPADDYTDPAPATTFAHLDATTNLERSIAELGIFPAVDPLASTSRALAPDIVGQEHYDVARSVQKILQRYKELQDIIAILGMDELSDDDKQVVGRARRIQRFLSQSFHVAEQFTGNPGQYVPLKETVRSFKEILEGKHDHLPEGAFLYVGTIEEAVEKAKKMA.

157–164 contributes to the ATP binding site; sequence GGAGVGKT.

Belongs to the ATPase alpha/beta chains family. F-type ATPases have 2 components, CF(1) - the catalytic core - and CF(0) - the membrane proton channel. CF(1) has five subunits: alpha(3), beta(3), gamma(1), delta(1), epsilon(1). CF(0) has three main subunits: a(1), b(2) and c(9-12). The alpha and beta chains form an alternating ring which encloses part of the gamma chain. CF(1) is attached to CF(0) by a central stalk formed by the gamma and epsilon chains, while a peripheral stalk is formed by the delta and b chains.

It localises to the cell membrane. It catalyses the reaction ATP + H2O + 4 H(+)(in) = ADP + phosphate + 5 H(+)(out). In terms of biological role, produces ATP from ADP in the presence of a proton gradient across the membrane. The catalytic sites are hosted primarily by the beta subunits. The protein is ATP synthase subunit beta of Brevibacillus brevis (strain 47 / JCM 6285 / NBRC 100599).